Reading from the N-terminus, the 384-residue chain is Aryl-alcohol dehydrogenase GME11368 (384 aa).

D69 provides a ligand contact to NADP(+). The Proton donor role is filled by Y74. Residues 177-178 (SD), Q203, and 301-309 (RKPEHLKAN) contribute to the NADP(+) site.

The protein belongs to the aldo/keto reductase family. Aldo/keto reductase 2 subfamily.

The protein operates within secondary metabolite biosynthesis. In terms of biological role, aryl-alcohol dehydrogenase; part of the gene cluster that mediates the biosynthesis of dibenzodioxocinones such as pestalotiollide B, a novel class of inhibitors against cholesterol ester transfer protein (CEPT). The biosynthesis initiates from condensation of acetate and malonate units catalyzed by the non-reducing PKS pks8/GME11356. Pks8/GME11356 lacks a thioesterase (TE) domain, which is important to the cyclizing of the third ring of atrochrysone carboxylic acid, and the esterase GME11355 might play the role of TE and catalyzes the cyclization reaction of the C ring. The lactamase-like protein GME11357 (or other beta-lactamases in Pestalotiopsis microspora) probably hydrolyzes the thioester bond between the ACP of pks8/GME11356 and the intermediate to release atrochrysone carboxylic acid, which is spontaneously dehydrates to form endocrocin anthrone. Endocrocin anthrone is further converted to emodin via the endocrocin intermediate. Emodin is then oxidized by several enzymes such as the Baeyer-Villiger oxidase GME11358, the oxidoreductase GME11367, the short chain dehydrogenase/reductase GME11373, as well as by other oxidoreductases from the cluster, to modify the A and C rings and open the B ring, and finally yield monodictyphenone. The prenyltransferase GME11375 may catalyze the addition reaction between the C5 side chains and the carbon bone of dibenzodioxocinones. The remaining biochemical reactions to the final product dibenzodioxocinones should be methylation catalyzed by methyltransferase GME11366 and reduction and lactonization reaction catalyzed by a series of oxidordeuctases. The sequence is that of Aryl-alcohol dehydrogenase GME11368 from Pestalotiopsis microspora.